A 445-amino-acid polypeptide reads, in one-letter code: Methionine aminopeptidase 2 (445 aa).

The disordered stretch occupies residues 1–80 (MAAQVASGVG…TSKVQTEPPR (80 aa)). The segment covering 57 to 71 (AKKKKKKTKKKKKGT) has biased composition (basic residues). His-195 is a binding site for substrate. Asp-215, Asp-226, and His-295 together coordinate a divalent metal cation. His-303 provides a ligand contact to substrate. A divalent metal cation contacts are provided by Glu-331 and Glu-426.

The protein belongs to the peptidase M24A family. Methionine aminopeptidase eukaryotic type 2 subfamily. Requires Co(2+) as cofactor. Zn(2+) serves as cofactor. It depends on Mn(2+) as a cofactor. Fe(2+) is required as a cofactor.

Its subcellular location is the cytoplasm. The enzyme catalyses Release of N-terminal amino acids, preferentially methionine, from peptides and arylamides.. Cotranslationally removes the N-terminal methionine from nascent proteins. The N-terminal methionine is often cleaved when the second residue in the primary sequence is small and uncharged (Met-Ala-, Cys, Gly, Pro, Ser, Thr, or Val). In Paracoccidioides brasiliensis (strain Pb18), this protein is Methionine aminopeptidase 2.